A 418-amino-acid polypeptide reads, in one-letter code: Perilipin-1 homolog (418 aa).

The required for lipid droplet localization stretch occupies residues 211 to 275 (LTIGQRVKNL…EKKTWVIEKS (65 aa)).

This sequence belongs to the perilipin family. As to expression, expressed in intestinal and epidermal cells. Expressed in the muscle and hypodermis.

The protein localises to the lipid droplet. Its function is as follows. Lipid droplet-associated protein which plays a role in lipid droplet clustering. The protein is Perilipin-1 homolog of Caenorhabditis elegans.